We begin with the raw amino-acid sequence, 438 residues long: Aspartic proteinase nepenthesin-2 (438 aa).

Positions 1–24 are cleaved as a signal peptide; sequence MASPLYSVVLGLAIVSAIVAPTSS. The propeptide at 25–79 is activation peptide; it reads TSRGTLLHHGQKRPQPGLRVDLEQVDSGKNLTKYELIKRAIKRGERRMRSINAML. N54 carries N-linked (GlcNAc...) asparagine glycosylation. One can recognise a Peptidase A1 domain in the interval 96-431; that stretch reads YLMNVAIGTP…DLQNLAVSFV (336 aa). The active site involves D114. 6 disulfides stabilise this stretch: C124-C127, C130-C204, C151-C169, C156-C164, C241-C435, and C354-C395. The active site involves D315.

This sequence belongs to the peptidase A1 family.

It localises to the secreted. The enzyme catalyses Similar to pepsin, but also cleaves on either side of Asp and at Lys-|-Arg.. Inhibited by pepstatin and by diazoacetyl-D,L-norleucine methyl ester (DAN) in the presence of Cu(2+) ions. Its function is as follows. Extracellular proteinase found in the pitcher fluid of carnivorous plants. Digest prey for nitrogen uptake. This chain is Aspartic proteinase nepenthesin-2 (nep2), found in Nepenthes gracilis (Slender pitcher plant).